The primary structure comprises 503 residues: Pre-glycoprotein polyprotein GP complex (503 aa).

A lipid anchor (N-myristoyl glycine; by host) is attached at Gly-2. Over 2-17 (GQIVTLIQSIPEVLQE) the chain is Extracellular. The chain crosses the membrane as a helical span at residues 18–33 (VFNVALIIVSVLCIVK). Over 34-58 (GFVNLMRCGLFQLVTFLILSGRSCD) the chain is Cytoplasmic. Position 57 (Cys-57) interacts with Zn(2+). Over 59–446 (SMMIDRRHNL…QGKTPLALTD (388 aa)) the chain is Extracellular. Intrachain disulfides connect Cys-86–Cys-248, Cys-293–Cys-306, Cys-315–Cys-324, and Cys-378–Cys-399. N-linked (GlcNAc...) asparagine; by host glycans are attached at residues Asn-89, Asn-111, Asn-181, and Asn-241. N-linked (GlcNAc...) asparagine; by host glycans are attached at residues Asn-379, Asn-387, Asn-404, and Asn-409. The helical transmembrane segment at 447–467 (ICFWSLVFYTITVFLHIVGIP) threads the bilayer. Over 468–503 (THRHIIGDGCPKPHRITRNSLCSCGYYKYQRNLTNG) the chain is Cytoplasmic. The Zn(2+) site is built by His-469, His-471, Cys-477, His-481, Cys-489, and Cys-491.

Belongs to the arenaviridae GPC protein family. In terms of assembly, interacts with glycoprotein G2. Part of the GP complex (GP-C) together with glycoprotein G1 and glycoprotein G2. The GP-complex interacts with protein Z, which interacts with ribonucleocapsid; these interactions may induce virion budding. Homotrimer; disulfide-linked. In pre-fusion state, G1 homotrimers bind G2 homotrimers via ionic interactions. Part of the GP complex (GP-C) together with glycoprotein G2 and the stable signal peptide. The GP-complex interacts with protein Z, which interacts with ribonucleocapsid; these interactions may induce virion budding. As to quaternary structure, homotrimer. Interacts with the stable signal peptide. In pre-fusion state, G2 homotrimers bind G1 homotrimers via ionic interactions. Part of the GP complex (GP-C) together with glycoprotein G1 and the stable signal peptide. Acidification in the endosome triggers rearrangements, which ultimately leads to a 6 helix bundle formed by the two heptad repeat domains (HR1 and HR2) in post-fusion state. The GP-complex interacts with protein Z, which interacts with ribonucleocapsid; these interactions may induce virion budding. Post-translationally, specific enzymatic cleavages in vivo yield mature proteins. GP-C polyprotein is cleaved in the endoplasmic reticulum by the host protease MBTPS1. Only cleaved glycoprotein is incorporated into virions. The SSP remains stably associated with the GP complex following cleavage by signal peptidase and plays crucial roles in the trafficking of GP through the secretory pathway. In terms of processing, myristoylation is necessary for GP2-mediated fusion activity.

Its subcellular location is the virion membrane. The protein resides in the host endoplasmic reticulum membrane. It is found in the host Golgi apparatus membrane. It localises to the host cell membrane. Functions as a cleaved signal peptide that is retained as the third component of the GP complex (GP-C). Helps to stabilize the spike complex in its native conformation. The SSP is required for efficient glycoprotein expression, post-translational maturation cleavage of G1 and G2, glycoprotein transport to the cell surface plasma membrane, formation of infectious virus particles, and acid pH-dependent glycoprotein-mediated cell fusion. In terms of biological role, forms the virion spikes together with glycoprotein G2. The glycoprotein spike trimers are connected to the underlying matrix. Interacts with the host receptor leading to virus endocytosis. Its function is as follows. Forms the virion spikes together with glycoprotein G1. The glycoprotein spike trimers are connected to the underlying matrix. Class I viral fusion protein that directs fusion of viral and host endosomal membranes, leading to delivery of the nucleocapsid into the cytoplasm. Membrane fusion is mediated by irreversible conformational changes induced by acidification. This is Pre-glycoprotein polyprotein GP complex from Cavia cutleri (Guinea pig).